A 935-amino-acid chain; its full sequence is Peptidyl-glycine alpha-amidating monooxygenase A (935 aa).

The first 36 residues, 1–36 (MASLSSSFLVLFLLFQNSCYCFRSPLSVFKRYEEST), serve as a signal peptide directing secretion. Residues 1-390 (MASLSSSFLV…KREEEEVLDQ (390 aa)) are peptidylglycine alpha-hydroxylating monooxygenase. At 37–825 (RSLSNDCLGT…VQESSAGVSF (789 aa)) the chain is on the intragranular side. 5 cysteine pairs are disulfide-bonded: Cys-43–Cys-182, Cys-77–Cys-122, Cys-110–Cys-127, Cys-223–Cys-330, and Cys-289–Cys-311. Residues His-103 and His-104 each contribute to the Cu(2+) site. His-168, His-238, His-240, and Met-310 together coordinate Cu(2+). The disordered stretch occupies residues 362–385 (HGHHHTEAEPEKNTGLQQPKREEE). The interval 391 to 712 (DVHLEEDTDW…SPSKAEHRSV (322 aa)) is peptidyl-alpha-hydroxyglycine alpha-amidating lyase. Position 426 (Arg-426) interacts with a protein. NHL repeat units lie at residues 463–504 (SKVL…LGAG), 512–557 (LGRA…FSPN), and 565–609 (GEET…FHAE). Cystine bridges form between Cys-526-Cys-547 and Cys-594-Cys-605. Residues Tyr-546 and Arg-598 each coordinate a protein. Residue Asn-658 is glycosylated (N-linked (GlcNAc...) asparagine). The stretch at 662–705 (GDILDTFIPARKNFDMPHDIAAADDGTVYVGDAHANAVWKFSPS) is one NHL 4 repeat. Over residues 728–751 (FETHIRSRPKTNESVEKQTQEKQQ) the composition is skewed to basic and acidic residues. Disordered stretches follow at residues 728–764 (FETHIRSRPKTNESVEKQTQEKQQKQKNSAGVSTQEK) and 778–812 (QEKQNVVQESSAGVPTQEKQSVVQESSAGVSTQEK). Asn-739 carries N-linked (GlcNAc...) asparagine glycosylation. Residues 755 to 764 (NSAGVSTQEK) show a composition bias toward polar residues. Residues 826 to 846 (VLIITLLIIPIAVLIAIAIFI) traverse the membrane as a helical segment. The Cytoplasmic portion of the chain corresponds to 847-935 (RWRKVRMYGG…PIPPAPVSSS (89 aa)). The interval 896–935 (KGFDRLSTEGSDQEKDDDDGSDSEEEYSAPPIPPAPVSSS) is disordered. A compositionally biased stretch (acidic residues) spans 909–922 (EKDDDDGSDSEEEY). The span at 925 to 935 (PPIPPAPVSSS) shows a compositional bias: pro residues.

This sequence in the C-terminal section; belongs to the peptidyl-alpha-hydroxyglycine alpha-amidating lyase family. In the N-terminal section; belongs to the copper type II ascorbate-dependent monooxygenase family. In terms of assembly, monomer. It depends on Zn(2+) as a cofactor. Cu(2+) is required as a cofactor.

The protein resides in the cytoplasmic vesicle. Its subcellular location is the secretory vesicle membrane. It carries out the reaction a [peptide]-C-terminal glycine + 2 L-ascorbate + O2 = a [peptide]-C-terminal (2S)-2-hydroxyglycine + 2 monodehydro-L-ascorbate radical + H2O. The catalysed reaction is a [peptide]-C-terminal (2S)-2-hydroxyglycine = a [peptide]-C-terminal amide + glyoxylate. Bifunctional enzyme that catalyzes amidation of the C-terminus of proteins. Alpha-amidation is present at the C-terminus of many endocrine hormones and neuropeptides and is required for their activity. C-terminal amidation also takes place in response to protein fragmentation triggered by oxidative stress, promoting degradation of amidated protein fragments by the proteasome. Alpha-amidation involves two sequential reactions, both of which are catalyzed by separate catalytic domains of the enzyme. The first step, catalyzed by peptidyl alpha-hydroxylating monooxygenase (PHM) domain, is the copper-, ascorbate-, and O2- dependent stereospecific hydroxylation (with S stereochemistry) at the alpha-carbon (C-alpha) of the C-terminal glycine of the peptidylglycine substrate. The second step, catalyzed by the peptidylglycine amidoglycolate lyase (PAL) domain, is the zinc-dependent cleavage of the N-C-alpha bond, producing the alpha-amidated peptide and glyoxylate. This Xenopus laevis (African clawed frog) protein is Peptidyl-glycine alpha-amidating monooxygenase A (pam-a).